The following is a 317-amino-acid chain: tRNA dimethylallyltransferase (317 aa).

14–21 (GPTASGKS) contributes to the ATP binding site. Substrate is bound at residue 16-21 (TASGKS). 2 interaction with substrate tRNA regions span residues 39–42 (DSVL) and 163–167 (QRIQR).

This sequence belongs to the IPP transferase family. In terms of assembly, monomer. Mg(2+) serves as cofactor.

The catalysed reaction is adenosine(37) in tRNA + dimethylallyl diphosphate = N(6)-dimethylallyladenosine(37) in tRNA + diphosphate. In terms of biological role, catalyzes the transfer of a dimethylallyl group onto the adenine at position 37 in tRNAs that read codons beginning with uridine, leading to the formation of N6-(dimethylallyl)adenosine (i(6)A). This Xylella fastidiosa (strain 9a5c) protein is tRNA dimethylallyltransferase.